The sequence spans 447 residues: Neuraminidase (447 aa).

Topologically, residues 1–6 are intravirion; the sequence is MNPNQK. Residues 7–27 traverse the membrane as a helical segment; that stretch reads IITIGSICMGIGIISLILQIG. Residues 11–33 form an involved in apical transport and lipid raft association region; that stretch reads GSICMGIGIISLILQIGNIISMW. At 28–447 the chain is on the virion surface side; that stretch reads NIISMWVSHS…GAELPFTIDK (420 aa). Positions 36 to 68 are hypervariable stalk region; the sequence is HSIQTENQNHHEACNPSIAGQDAASVALAGNSS. N-linked (GlcNAc...) asparagine; by host glycosylation is present at Asn66. Residues 69–447 form a head of neuraminidase region; sequence LCPISGWAIY…GAELPFTIDK (379 aa). 8 disulfides stabilise this stretch: Cys70-Cys395, Cys102-Cys107, Cys162-Cys209, Cys211-Cys216, Cys257-Cys270, Cys259-Cys268, Cys296-Cys313, and Cys399-Cys424. Position 96 (Arg96) interacts with substrate. N-linked (GlcNAc...) asparagine; by host glycosylation occurs at Asn124. Asp129 acts as the Proton donor/acceptor in catalysis. Substrate is bound at residue Arg130. Residue Asn213 is glycosylated (N-linked (GlcNAc...) asparagine; by host). 255-256 lines the substrate pocket; that stretch reads EE. Substrate is bound at residue Arg271. Residues Asp272, Gly276, and Asp302 each coordinate Ca(2+). Arg346 lines the substrate pocket. Tyr380 acts as the Nucleophile in catalysis.

The protein belongs to the glycosyl hydrolase 34 family. As to quaternary structure, homotetramer. The cofactor is Ca(2+). In terms of processing, N-glycosylated.

It localises to the virion membrane. Its subcellular location is the host apical cell membrane. It catalyses the reaction Hydrolysis of alpha-(2-&gt;3)-, alpha-(2-&gt;6)-, alpha-(2-&gt;8)- glycosidic linkages of terminal sialic acid residues in oligosaccharides, glycoproteins, glycolipids, colominic acid and synthetic substrates.. With respect to regulation, inhibited by the neuraminidase inhibitors zanamivir (Relenza) and oseltamivir (Tamiflu). These drugs interfere with the release of progeny virus from infected cells and are effective against all influenza strains. Resistance to neuraminidase inhibitors is quite rare. In terms of biological role, catalyzes the removal of terminal sialic acid residues from viral and cellular glycoconjugates. Cleaves off the terminal sialic acids on the glycosylated HA during virus budding to facilitate virus release. Additionally helps virus spread through the circulation by further removing sialic acids from the cell surface. These cleavages prevent self-aggregation and ensure the efficient spread of the progeny virus from cell to cell. Otherwise, infection would be limited to one round of replication. Described as a receptor-destroying enzyme because it cleaves a terminal sialic acid from the cellular receptors. May facilitate viral invasion of the upper airways by cleaving the sialic acid moieties on the mucin of the airway epithelial cells. Likely to plays a role in the budding process through its association with lipid rafts during intracellular transport. May additionally display a raft-association independent effect on budding. Plays a role in the determination of host range restriction on replication and virulence. Sialidase activity in late endosome/lysosome traffic seems to enhance virus replication. The polypeptide is Neuraminidase (Aves).